The following is an 821-amino-acid chain: uncharacterized protein (821 aa).

Disordered regions lie at residues 1–20 (MGQTNSRHSLIETDEPTTSS), 55–96 (SENY…EAYS), 134–205 (SYDF…NNEH), 240–263 (RLHQSPSPIPNSNDNDSQTRRSSW), 274–293 (PEEFPNASNPEAHSNFTPLN), 360–381 (NVLQNSSQNGNDQISSDPESNS), 430–450 (TSEDHAPTMTQENQSLHNESR), 467–497 (EFSTDLPPTFERSNSTFSHPEPTRSDFSQAF), 512–535 (RNLFPTSNSGNQSTSSFSRYNQPT), and 549–641 (AQEP…SNQT). 2 stretches are compositionally biased toward polar residues: residues 58-88 (YADTPSRNTPNSSNGFPSETLVTSSAHCSTQ) and 185-203 (SLPSNSNSTYTTPLQSINN). The segment covering 279–293 (NASNPEAHSNFTPLN) has biased composition (polar residues). Residues 437 to 450 (TMTQENQSLHNESR) are compositionally biased toward polar residues. Low complexity-rich tracts occupy residues 517–529 (TSNSGNQSTSSFS) and 568–578 (SSLLDSSNSNS). The segment covering 579 to 622 (QRPFSTVPSESNVFSRNASGNFSMSQTHQPTTDNTSSFSTQPGR) has biased composition (polar residues). Residues 766–809 (CLICLETYTNGDICRKLQACKHFFHQACIDQWLTTGNNSCPLCR) form an RING-type; atypical zinc finger.

This is an uncharacterized protein from Schizosaccharomyces pombe (strain 972 / ATCC 24843) (Fission yeast).